A 447-amino-acid polypeptide reads, in one-letter code: 3-O-methyltransferase 2 (447 aa).

S-adenosyl-L-methionine contacts are provided by residues 264–265 (GG), Asp287, 318–319 (DF), and Arg334. His338 (proton acceptor) is an active-site residue.

Belongs to the class I-like SAM-binding methyltransferase superfamily. Cation-independent O-methyltransferase family. COMT subfamily.

In terms of biological role, S-adenosyl-L-methionine-dependent methyltransferase that preferentially catalyzes the methylation of 3-OH phenolic compounds like isovanillic acid and 3-OH-4-Met cinnamic acid. May play a role in promoting lignin degradation by methylating and inactivating free-hydroxyl phenolic compounds, products of lignin cleavage which are known inhibitors of lignin peroxidases. The protein is 3-O-methyltransferase 2 of Phanerochaete chrysosporium (strain RP-78 / ATCC MYA-4764 / FGSC 9002) (White-rot fungus).